The following is a 248-amino-acid chain: Protein PARTING DANCERS homolog (248 aa).

Over residues 1-10 (MERSTHSTGW) the composition is skewed to polar residues. The disordered stretch occupies residues 1-25 (MERSTHSTGWTCLPPPPPEPAAPGR).

It belongs to the ERCC1/RAD10/SWI10 family. Interacts with SHOC1 (via C-terminus). Interacts with HEI10. Highly expressed in anthers and pistil during meiosis. Expressed in pollen mother cells (PMCs) during meiosis. Expressed at low levels in roots, shoots, leaves, flowers, and glumes.

It is found in the chromosome. The protein localises to the nucleus. It localises to the cytoplasm. The protein resides in the cell membrane. In terms of biological role, essential for normal crossover (CO) formation during meiosis. Essential component for the formation of class I meiotic COs. Interacts with SHOC1, another meiotic component, to regulate CO formation, possibly by stabilizing the recombination intermediates during meiosis. PTD and SHOC1 may form transient heterotrimeric or heterotetrameric complexes with HEI10 and/or ZIP4 to promote class I COs formation. Does not seem to be involved in early meiotic recombination steps involving double-strand break (DSB) formation, processing, and single-strand invasion. Does not seem to be involved in homologous pairing or synaptonemal complex (SC) assembly. In Oryza sativa subsp. japonica (Rice), this protein is Protein PARTING DANCERS homolog.